The chain runs to 220 residues: tRNA (guanine-N(7)-)-methyltransferase (220 aa).

S-adenosyl-L-methionine contacts are provided by Glu-46, Asp-71, Asp-100, and Asp-122. Residue Asp-122 is part of the active site. Substrate is bound by residues Lys-126, Asp-158, and 196 to 199 (TEYE).

It belongs to the class I-like SAM-binding methyltransferase superfamily. TrmB family.

It carries out the reaction guanosine(46) in tRNA + S-adenosyl-L-methionine = N(7)-methylguanosine(46) in tRNA + S-adenosyl-L-homocysteine. It functions in the pathway tRNA modification; N(7)-methylguanine-tRNA biosynthesis. Its function is as follows. Catalyzes the formation of N(7)-methylguanine at position 46 (m7G46) in tRNA. This chain is tRNA (guanine-N(7)-)-methyltransferase, found in Malacoplasma penetrans (strain HF-2) (Mycoplasma penetrans).